The following is a 386-amino-acid chain: Glucose-1-phosphate adenylyltransferase (386 aa).

Alpha-D-glucose 1-phosphate is bound by residues Tyr99, Gly164, 179-180, and Ser190; that span reads EK.

This sequence belongs to the bacterial/plant glucose-1-phosphate adenylyltransferase family. Homotetramer.

It carries out the reaction alpha-D-glucose 1-phosphate + ATP + H(+) = ADP-alpha-D-glucose + diphosphate. The protein operates within glycan biosynthesis; glycogen biosynthesis. Its function is as follows. Involved in the biosynthesis of ADP-glucose, a building block required for the elongation reactions to produce glycogen. Catalyzes the reaction between ATP and alpha-D-glucose 1-phosphate (G1P) to produce pyrophosphate and ADP-Glc. This chain is Glucose-1-phosphate adenylyltransferase, found in Clostridioides difficile (strain 630) (Peptoclostridium difficile).